The following is a 163-amino-acid chain: Peptide methionine sulfoxide reductase MsrA (163 aa).

The active site involves Cys-10.

The protein belongs to the MsrA Met sulfoxide reductase family.

The catalysed reaction is L-methionyl-[protein] + [thioredoxin]-disulfide + H2O = L-methionyl-(S)-S-oxide-[protein] + [thioredoxin]-dithiol. It carries out the reaction [thioredoxin]-disulfide + L-methionine + H2O = L-methionine (S)-S-oxide + [thioredoxin]-dithiol. Has an important function as a repair enzyme for proteins that have been inactivated by oxidation. Catalyzes the reversible oxidation-reduction of methionine sulfoxide in proteins to methionine. The polypeptide is Peptide methionine sulfoxide reductase MsrA (Vesicomyosocius okutanii subsp. Calyptogena okutanii (strain HA)).